A 118-amino-acid polypeptide reads, in one-letter code: Large ribosomal subunit protein uL18 (118 aa).

The protein belongs to the universal ribosomal protein uL18 family. As to quaternary structure, part of the 50S ribosomal subunit; part of the 5S rRNA/L5/L18/L25 subcomplex. Contacts the 5S and 23S rRNAs.

This is one of the proteins that bind and probably mediate the attachment of the 5S RNA into the large ribosomal subunit, where it forms part of the central protuberance. This Rickettsia canadensis (strain McKiel) protein is Large ribosomal subunit protein uL18.